Consider the following 468-residue polypeptide: Proline--tRNA ligase (468 aa).

The protein belongs to the class-II aminoacyl-tRNA synthetase family. ProS type 3 subfamily. In terms of assembly, homodimer.

It is found in the cytoplasm. The catalysed reaction is tRNA(Pro) + L-proline + ATP = L-prolyl-tRNA(Pro) + AMP + diphosphate. In terms of biological role, catalyzes the attachment of proline to tRNA(Pro) in a two-step reaction: proline is first activated by ATP to form Pro-AMP and then transferred to the acceptor end of tRNA(Pro). This is Proline--tRNA ligase from Frankia alni (strain DSM 45986 / CECT 9034 / ACN14a).